We begin with the raw amino-acid sequence, 681 residues long: Envelope glycoprotein (681 aa).

Residues 1–18 (MKTIYFLISLILIQSIKT) form the signal peptide. Over 19-648 (LPVLEIASNS…GLGGKWWTSD (630 aa)) the chain is Extracellular. A receptor-binding region spans residues 38 to 188 (SGTLQKTEDV…FSRQGQGYRH (151 aa)). 7 N-linked (GlcNAc...) asparagine; by host glycosylation sites follow: Asn94, Asn171, Asn190, Asn202, Asn207, Asn219, and Asn223. Residues 223–428 (NQTCPPSLKP…PDSSPTTRPP (206 aa)) form a disordered region. Composition is skewed to polar residues over residues 236–260 (PTVT…MNPS) and 278–315 (PHTT…TNPS). The segment at 277–455 (GPHTTLNVVT…PFLDGLINTE (179 aa)) is mucin-like region. 10 N-linked (GlcNAc...) asparagine; by host glycosylation sites follow: Asn310, Asn323, Asn336, Asn350, Asn360, Asn364, Asn381, Asn397, Asn475, and Asn487. Positions 327 to 347 (PTTQPATLLNNTNTTPTYNTL) are enriched in low complexity. 2 stretches are compositionally biased toward polar residues: residues 348–365 (KYNL…TNND) and 373–394 (SEQT…TTGQ). The span at 395-428 (DTNSTTNIIMTTSDITSKHPTNSSPDSSPTTRPP) shows a compositional bias: low complexity. The tract at residues 529 to 549 (GLSWIPFFGPGIEGLYTAGLI) is fusion peptide. Asn564 and Asn619 each carry an N-linked (GlcNAc...) asparagine; by host glycan. The chain crosses the membrane as a helical span at residues 649-669 (WGVLTNLGILLLLSIAVLIAL). At 670-681 (SCICRIFTKYIG) the chain is on the cytoplasmic side. 2 S-palmitoyl cysteine; by host lipidation sites follow: Cys671 and Cys673.

The protein belongs to the filoviruses glycoprotein family. As to quaternary structure, homotrimer; each monomer consists of a GP1 and a GP2 subunit linked by disulfide bonds. The resulting peplomers (GP1,2) protrude from the virus surface as spikes. GP1,2 interacts with human CD209 and CLEC4M (collectively referred to as DC-SIGN(R)). Asialoglycoprotein receptor (ASGP-R) may be a liver-specific receptor for GP1,2. Members of the Tyro3 receptor tyrosine kinase family may be cell entry factors interacting with GP1,2. In terms of processing, N-glycosylated. Post-translationally, O-glycosylated in the mucin-like region. Specific enzymatic cleavages in vivo yield mature proteins. The precursor is processed into GP1 and GP2 by host cell furin in the trans Golgi, and maybe by other host proteases, to yield the mature GP1 and GP2 proteins. The cleavage site corresponds to the furin optimal cleavage sequence [KR]-X-[KR]-R. In terms of processing, GP1 is phosphorylated on serine residues between residues 260 and 273.

Its subcellular location is the virion membrane. It is found in the host cell membrane. GP1 is responsible for binding to the receptor(s) on target cells. Interacts with CD209/DC-SIGN and CLEC4M/DC-SIGNR which act as cofactors for virus entry into the host cell. Binding to CD209 and CLEC4M, which are respectively found on dendritic cells (DCs), and on endothelial cells of liver sinusoids and lymph node sinuses, facilitate infection of macrophages and endothelial cells. These interactions not only facilitate virus cell entry, but also allow capture of viral particles by DCs and subsequent transmission to susceptible cells without DCs infection (trans infection). In terms of biological role, GP2 acts as a class I viral fusion protein. Under the current model, the protein has at least 3 conformational states: pre-fusion native state, pre-hairpin intermediate state, and post-fusion hairpin state. During viral and target cell membrane fusion, the coiled coil regions (heptad repeats) assume a trimer-of-hairpins structure, positioning the fusion peptide in close proximity to the C-terminal region of the ectodomain. The formation of this structure appears to drive apposition and subsequent fusion of viral and target cell membranes. Responsible for penetration of the virus into the cell cytoplasm by mediating the fusion of the membrane of the endocytosed virus particle with the endosomal membrane. Low pH in endosomes induces an irreversible conformational change in GP2, releasing the fusion hydrophobic peptide. This is Envelope glycoprotein (GP) from Chlorocebus aethiops (Green monkey).